Reading from the N-terminus, the 448-residue chain is MLEKVVIANRGEIALRILRACKELGIKTVAVHSTADRDLKHVLLADETICIGPAPSAKSYLNIPAIIAAAEVTGADAIHPGYGFLSENADFAEQVERSGFTFIGPTADVIRLMGDKVSAIKAMKKAGVPCVPGSDGPVSNDIAKNKEIAKRIGYPIIIKASGGGGGRGMRVVRSEDALEESIAMTKAEAKAAFNNDMVYMEKYLENPRHVEIQVLADTHGNAVYLAERDCSMQRRHQKVVEEAPAPGITEEVRRDIGSRCANACVEIGYRGAGTFEFLYENGEFYFIEMNTRIQVEHPVTEMITGVDLVKEQLRIAAGLPISFKQEDIKVKGHAMECRINAEDPKTFLPSPGKVNHLHSPGGLGVRWDSHVYGGYTVPPHYDSMIAKLITYGDTREVAIRRMQNALSETIIDGIKTNIPLHELILEDENFQKGGTNIHYLEKKLGMNE.

Residues 1 to 445 enclose the Biotin carboxylation domain; it reads MLEKVVIANR…NIHYLEKKLG (445 aa). ATP contacts are provided by residues K116, K159, 165-166, 201-204, H209, and H236; these read GG and EKYL. The ATP-grasp domain occupies 120–317; sequence IKAMKKAGVP…LVKEQLRIAA (198 aa). Residue K238 coordinates hydrogencarbonate. Residues E276 and E288 each contribute to the ATP site. Positions 276, 288, and 290 each coordinate Mg(2+). Residues E276, E288, and N290 each contribute to the Mn(2+) site. Residues R292, V295, and R338 each contribute to the hydrogencarbonate site. The active site involves R292. R338 is a binding site for biotin.

As to quaternary structure, acetyl-CoA carboxylase is a heterohexamer of biotin carboxyl carrier protein, biotin carboxylase and the two subunits of carboxyl transferase in a 2:2 complex. The cofactor is Mg(2+). It depends on Mn(2+) as a cofactor.

It carries out the reaction N(6)-biotinyl-L-lysyl-[protein] + hydrogencarbonate + ATP = N(6)-carboxybiotinyl-L-lysyl-[protein] + ADP + phosphate + H(+). It functions in the pathway lipid metabolism; malonyl-CoA biosynthesis; malonyl-CoA from acetyl-CoA: step 1/1. This protein is a component of the acetyl coenzyme A carboxylase complex; first, biotin carboxylase catalyzes the carboxylation of the carrier protein and then the transcarboxylase transfers the carboxyl group to form malonyl-CoA. This Haemophilus influenzae (strain ATCC 51907 / DSM 11121 / KW20 / Rd) protein is Biotin carboxylase (accC).